The following is a 159-amino-acid chain: MTKLATICYIDNGCELLLMHRNKKPNDVHEGKWISVGGKLEKGESPDECARREIFEETHLIVKQMDFKGIITFPDFTPGHDWYTYVFKVRDFEGRLISDKDSREGTLEWVPYNQVLTKPTWEGDYEIFKWILDDAPFFSAKFVYQEQKLVDKHVIFYEK.

The region spanning 1–133 (MTKLATICYI…DYEIFKWILD (133 aa)) is the Nudix hydrolase domain. The Mg(2+) site is built by G38, E53, E56, and E57. The Nudix box signature appears at 38-59 (GKLEKGESPDECARREIFEETH).

The protein belongs to the Nudix hydrolase family. As to quaternary structure, homotrimer. Mg(2+) is required as a cofactor.

The enzyme catalyses 8-oxo-dGTP + H2O = 8-oxo-dGMP + diphosphate + H(+). Functionally, involved in the DNA repair system to avoid A.T to G.C transversions. Degrades 8-oxo-dGTP to the monophosphate, but is also active on all of the nucleoside triphosphates. The protein is 8-oxo-dGTP diphosphatase (mutX) of Streptococcus mutans serotype c (strain ATCC 700610 / UA159).